Consider the following 403-residue polypeptide: Poly(rC)-binding protein 4 (403 aa).

3 KH domains span residues 17 to 67 (TLTL…TITG), 101 to 154 (PVTL…TVSG), and 241 to 293 (TSSQ…TITG).

As to expression, widely expressed, with highest levels in testis and lowest in heart.

It localises to the cytoplasm. In terms of biological role, single-stranded nucleic acid binding protein that binds preferentially to oligo dC. This is Poly(rC)-binding protein 4 (Pcbp4) from Mus musculus (Mouse).